Here is a 324-residue protein sequence, read N- to C-terminus: tRNA U34 carboxymethyltransferase (324 aa).

Carboxy-S-adenosyl-L-methionine-binding positions include lysine 91, tryptophan 105, lysine 110, glycine 130, 152-154, 181-182, methionine 196, tyrosine 200, and arginine 315; these read DPS and IE.

It belongs to the class I-like SAM-binding methyltransferase superfamily. CmoB family. In terms of assembly, homotetramer.

It catalyses the reaction carboxy-S-adenosyl-L-methionine + 5-hydroxyuridine(34) in tRNA = 5-carboxymethoxyuridine(34) in tRNA + S-adenosyl-L-homocysteine + H(+). Functionally, catalyzes carboxymethyl transfer from carboxy-S-adenosyl-L-methionine (Cx-SAM) to 5-hydroxyuridine (ho5U) to form 5-carboxymethoxyuridine (cmo5U) at position 34 in tRNAs. This chain is tRNA U34 carboxymethyltransferase, found in Aliivibrio fischeri (strain ATCC 700601 / ES114) (Vibrio fischeri).